Here is a 405-residue protein sequence, read N- to C-terminus: Mitochondrial outer membrane protein SLC25A46 (405 aa).

Residues 1-77 (MTSRRPDSFE…PDEAQSAAPP (77 aa)) form a disordered region. Residues 22 to 37 (FSGGYSGRSFNNSSSS) show a composition bias toward low complexity. One copy of the Solcar 1 repeat lies at 80 to 171 (QLNRFAGFGI…GIISECTPLP (92 aa)). A run of 6 helical transmembrane segments spans residues 87 to 107 (FGIGLASLFTENVLAHPCIVF), 151 to 171 (FVVQGVTLGTEGIISECTPLP), 183 to 203 (VVGHLVLKGLTYVVAMPFYSA), 242 to 262 (LLPLWNLVLPTVLHGILHYII), 302 to 322 (FPELMASFAASLCADVLLFPL), and 371 to 391 (MGFYKGFGSIVVQYSLHATVL). A Solcar 2 repeat occupies 299–401 (DAYFPELMAS…QITKMIYSTL (103 aa)).

It belongs to the mitochondrial carrier (TC 2.A.29) family.

It is found in the mitochondrion outer membrane. Transmembrane protein of the mitochondrial outer membrane that controls mitochondrial organization. May regulate the biogenesis and dynamics of mitochondrial cristae, the inwards folds of the inner mitochondrial membrane. Could regulate mitochondrial lipid homeostasis and thereby mitochondrial fission. This chain is Mitochondrial outer membrane protein SLC25A46 (slc25a46), found in Danio rerio (Zebrafish).